Consider the following 580-residue polypeptide: Formate--tetrahydrofolate ligase (580 aa).

Residue 65–72 (TPHGEGKT) participates in ATP binding.

This sequence belongs to the formate--tetrahydrofolate ligase family.

It catalyses the reaction (6S)-5,6,7,8-tetrahydrofolate + formate + ATP = (6R)-10-formyltetrahydrofolate + ADP + phosphate. The protein operates within one-carbon metabolism; tetrahydrofolate interconversion. The protein is Formate--tetrahydrofolate ligase of Shewanella baltica (strain OS223).